The primary structure comprises 67 residues: ATP synthase F(0) complex subunit 8 (67 aa).

A helical membrane pass occupies residues 8-24 (TWFITIVSMLLSLFILM). Lys54 is subject to N6-acetyllysine; alternate. Lys54 is subject to N6-succinyllysine; alternate. Residue Lys57 is modified to N6-acetyllysine.

It belongs to the ATPase protein 8 family. In terms of assembly, component of the ATP synthase complex composed at least of ATP5F1A/subunit alpha, ATP5F1B/subunit beta, ATP5MC1/subunit c (homooctomer), MT-ATP6/subunit a, MT-ATP8/subunit 8, ATP5ME/subunit e, ATP5MF/subunit f, ATP5MG/subunit g, ATP5MK/subunit k, ATP5MJ/subunit j, ATP5F1C/subunit gamma, ATP5F1D/subunit delta, ATP5F1E/subunit epsilon, ATP5PF/subunit F6, ATP5PB/subunit b, ATP5PD/subunit d, ATP5PO/subunit OSCP. ATP synthase complex consists of a soluble F(1) head domain (subunits alpha(3) and beta(3)) - the catalytic core - and a membrane F(0) domain - the membrane proton channel (subunits c, a, 8, e, f, g, k and j). These two domains are linked by a central stalk (subunits gamma, delta, and epsilon) rotating inside the F1 region and a stationary peripheral stalk (subunits F6, b, d, and OSCP). Interacts with PRICKLE3.

Its subcellular location is the mitochondrion membrane. In terms of biological role, subunit 8, of the mitochondrial membrane ATP synthase complex (F(1)F(0) ATP synthase or Complex V) that produces ATP from ADP in the presence of a proton gradient across the membrane which is generated by electron transport complexes of the respiratory chain. ATP synthase complex consist of a soluble F(1) head domain - the catalytic core - and a membrane F(1) domain - the membrane proton channel. These two domains are linked by a central stalk rotating inside the F(1) region and a stationary peripheral stalk. During catalysis, ATP synthesis in the catalytic domain of F(1) is coupled via a rotary mechanism of the central stalk subunits to proton translocation. In vivo, can only synthesize ATP although its ATP hydrolase activity can be activated artificially in vitro. Part of the complex F(0) domain. The sequence is that of ATP synthase F(0) complex subunit 8 from Dasypus novemcinctus (Nine-banded armadillo).